The primary structure comprises 338 residues: Glyceraldehyde-3-phosphate dehydrogenase (338 aa).

NAD(+) is bound by residues 12–13 (RI), Asp-34, and Arg-79. Residues 150 to 152 (SCT), Thr-181, 210 to 211 (TG), and Arg-233 each bind D-glyceraldehyde 3-phosphate. Cys-151 acts as the Nucleophile in catalysis. An NAD(+)-binding site is contributed by Asn-315.

This sequence belongs to the glyceraldehyde-3-phosphate dehydrogenase family. In terms of assembly, homotetramer.

It is found in the cytoplasm. The enzyme catalyses D-glyceraldehyde 3-phosphate + phosphate + NAD(+) = (2R)-3-phospho-glyceroyl phosphate + NADH + H(+). It participates in carbohydrate degradation; glycolysis; pyruvate from D-glyceraldehyde 3-phosphate: step 1/5. This is Glyceraldehyde-3-phosphate dehydrogenase (gpd1) from Hypocrea atroviridis (Trichoderma atroviride).